The primary structure comprises 236 residues: tRNA (guanine-N(7)-)-methyltransferase (236 aa).

The S-adenosyl-L-methionine site is built by aspartate 35, glutamate 60, asparagine 87, and aspartate 113. Aspartate 113 is an active-site residue. Substrate is bound by residues lysine 117 and aspartate 149.

It belongs to the class I-like SAM-binding methyltransferase superfamily. TrmB family.

The catalysed reaction is guanosine(46) in tRNA + S-adenosyl-L-methionine = N(7)-methylguanosine(46) in tRNA + S-adenosyl-L-homocysteine. It participates in tRNA modification; N(7)-methylguanine-tRNA biosynthesis. Catalyzes the formation of N(7)-methylguanine at position 46 (m7G46) in tRNA. The polypeptide is tRNA (guanine-N(7)-)-methyltransferase (Prochlorococcus marinus (strain MIT 9303)).